Reading from the N-terminus, the 101-residue chain is Small ribosomal subunit protein bS18c (101 aa).

The segment covering Met-1–Leu-19 has biased composition (basic residues). Residues Met-1–Gly-23 form a disordered region.

The protein belongs to the bacterial ribosomal protein bS18 family. As to quaternary structure, part of the 30S ribosomal subunit.

The protein localises to the plastid. It is found in the chloroplast. The protein is Small ribosomal subunit protein bS18c of Liriodendron tulipifera (Tuliptree).